A 145-amino-acid polypeptide reads, in one-letter code: Meiotically up-regulated gene 124 protein (145 aa).

2 helical membrane-spanning segments follow: residues 18–38 and 95–115; these read IILTIINSLVYLVNFISCPSI and FAWSCALPCFVDSFFPSNFFL.

It localises to the membrane. Has a role in meiosis. This chain is Meiotically up-regulated gene 124 protein (mug124), found in Schizosaccharomyces pombe (strain 972 / ATCC 24843) (Fission yeast).